Reading from the N-terminus, the 92-residue chain is Progonadoliberin-1 (92 aa).

An N-terminal signal peptide occupies residues 1–23; that stretch reads METIPKLMAAVVLLTVCLEGCSS. Gln-24 is modified (pyrrolidone carboxylic acid). Residue Gly-33 is modified to Glycine amide.

This sequence belongs to the GnRH family. Post-translationally, the precursor is cleaved by ACE, which removes the Gly-Lys-Arg peptide at the C-terminus, leading to mature hormone. The mature form of Gonadoliberin-1 is also cleaved and degraded by ACE. As to expression, central nervous system.

It is found in the secreted. Functionally, stimulates the secretion of gonadotropins; it stimulates the secretion of both luteinizing and follicle-stimulating hormones. This chain is Progonadoliberin-1 (Gnrh1), found in Rattus norvegicus (Rat).